Reading from the N-terminus, the 509-residue chain is ATP synthase subunit alpha (509 aa).

169–176 is an ATP binding site; that stretch reads GDRQTGKT.

It belongs to the ATPase alpha/beta chains family. In terms of assembly, F-type ATPases have 2 components, CF(1) - the catalytic core - and CF(0) - the membrane proton channel. CF(1) has five subunits: alpha(3), beta(3), gamma(1), delta(1), epsilon(1). CF(0) has three main subunits: a(1), b(2) and c(9-12). The alpha and beta chains form an alternating ring which encloses part of the gamma chain. CF(1) is attached to CF(0) by a central stalk formed by the gamma and epsilon chains, while a peripheral stalk is formed by the delta and b chains.

It localises to the cell inner membrane. It carries out the reaction ATP + H2O + 4 H(+)(in) = ADP + phosphate + 5 H(+)(out). Produces ATP from ADP in the presence of a proton gradient across the membrane. The alpha chain is a regulatory subunit. In Rhizobium etli (strain CIAT 652), this protein is ATP synthase subunit alpha.